The primary structure comprises 583 residues: Isocitrate dehydrogenase kinase/phosphatase (583 aa).

ATP contacts are provided by residues Ala-315–Met-321 and Lys-336. Residue Asp-371 is part of the active site.

Belongs to the AceK family.

It localises to the cytoplasm. It carries out the reaction L-seryl-[isocitrate dehydrogenase] + ATP = O-phospho-L-seryl-[isocitrate dehydrogenase] + ADP + H(+). Bifunctional enzyme which can phosphorylate or dephosphorylate isocitrate dehydrogenase (IDH) on a specific serine residue. This is a regulatory mechanism which enables bacteria to bypass the Krebs cycle via the glyoxylate shunt in response to the source of carbon. When bacteria are grown on glucose, IDH is fully active and unphosphorylated, but when grown on acetate or ethanol, the activity of IDH declines drastically concomitant with its phosphorylation. The protein is Isocitrate dehydrogenase kinase/phosphatase of Salmonella paratyphi B (strain ATCC BAA-1250 / SPB7).